We begin with the raw amino-acid sequence, 485 residues long: Glutamyl-tRNA(Gln) amidotransferase subunit A (485 aa).

Catalysis depends on charge relay system residues lysine 79 and serine 154. The active-site Acyl-ester intermediate is the serine 178.

Belongs to the amidase family. GatA subfamily. In terms of assembly, heterotrimer of A, B and C subunits.

It catalyses the reaction L-glutamyl-tRNA(Gln) + L-glutamine + ATP + H2O = L-glutaminyl-tRNA(Gln) + L-glutamate + ADP + phosphate + H(+). Allows the formation of correctly charged Gln-tRNA(Gln) through the transamidation of misacylated Glu-tRNA(Gln) in organisms which lack glutaminyl-tRNA synthetase. The reaction takes place in the presence of glutamine and ATP through an activated gamma-phospho-Glu-tRNA(Gln). In Clostridium botulinum (strain Langeland / NCTC 10281 / Type F), this protein is Glutamyl-tRNA(Gln) amidotransferase subunit A.